The sequence spans 95 residues: Cliotide T1 (95 aa).

Residues 1–30 (GIPCGESCVFIPCITGAIGCSCKSKVCYRN) constitute a cross-link (cyclopeptide (Gly-Asn)). Disulfide bonds link Cys-4–Cys-20, Cys-8–Cys-22, and Cys-13–Cys-27. The propeptide at 31 to 95 (HVIAAEAKTM…KDHLKMSITN (65 aa)) is removed in mature form.

Post-translationally, contains 3 disulfide bonds. In terms of processing, this is a cyclic peptide. In terms of tissue distribution, expressed in flower, stem, shoot, root, leaf, seed, pod and nodule (at protein level).

Functionally, probably participates in a plant defense mechanism. Active against Gram-negative bacteria E.coli ATCC 700926 (MIC=1.1 uM), K.pneumoniae ATTC 13883 (MIC=2.7 uM) and P.aeruginosa ATCC 39018 (MIC=4.7 uM). Has hemolytic and cytotoxic activity. In Clitoria ternatea (Butterfly pea), this protein is Cliotide T1.